The following is a 138-amino-acid chain: Large ribosomal subunit protein uL16 (138 aa).

Residues 1–17 (MLIPRKVKHRKQHHPRQ) show a composition bias toward basic residues. A disordered region spans residues 1 to 24 (MLIPRKVKHRKQHHPRQRGIASGG).

Belongs to the universal ribosomal protein uL16 family. As to quaternary structure, part of the 50S ribosomal subunit.

In terms of biological role, binds 23S rRNA and is also seen to make contacts with the A and possibly P site tRNAs. In Mycolicibacterium gilvum (strain PYR-GCK) (Mycobacterium gilvum (strain PYR-GCK)), this protein is Large ribosomal subunit protein uL16.